The chain runs to 206 residues: Somatotropin (206 aa).

An N-terminal signal peptide occupies residues 1–18 (MLDRVVVLLSVLCLGVSS). At glutamine 19 the chain carries Pyrrolidone carboxylic acid. A Zn(2+)-binding site is contributed by histidine 37. An intrachain disulfide couples cysteine 70 to cysteine 179. Glutamate 188 provides a ligand contact to Zn(2+). Cysteine 196 and cysteine 204 are oxidised to a cystine.

The protein belongs to the somatotropin/prolactin family.

The protein resides in the secreted. In terms of biological role, growth hormone plays an important role in growth control and is involved in the regulation of several anabolic processes. Implicated as an osmoregulatory substance important for seawater adaptation. The polypeptide is Somatotropin (gh) (Pseudocaranx dentex (White trevally)).